The sequence spans 263 residues: Protein STK_14130 (263 aa).

This sequence belongs to the CinA family.

In Sulfurisphaera tokodaii (strain DSM 16993 / JCM 10545 / NBRC 100140 / 7) (Sulfolobus tokodaii), this protein is Protein STK_14130.